Here is a 119-residue protein sequence, read N- to C-terminus: Ribonuclease P protein component (119 aa).

The protein belongs to the RnpA family. In terms of assembly, consists of a catalytic RNA component (M1 or rnpB) and a protein subunit.

The enzyme catalyses Endonucleolytic cleavage of RNA, removing 5'-extranucleotides from tRNA precursor.. RNaseP catalyzes the removal of the 5'-leader sequence from pre-tRNA to produce the mature 5'-terminus. It can also cleave other RNA substrates such as 4.5S RNA. The protein component plays an auxiliary but essential role in vivo by binding to the 5'-leader sequence and broadening the substrate specificity of the ribozyme. This is Ribonuclease P protein component from Aeromonas salmonicida (strain A449).